Reading from the N-terminus, the 160-residue chain is Large ribosomal subunit protein uL22c (160 aa).

Belongs to the universal ribosomal protein uL22 family. In terms of assembly, part of the 50S ribosomal subunit.

Its subcellular location is the plastid. The protein localises to the chloroplast. This protein binds specifically to 23S rRNA. Its function is as follows. The globular domain of the protein is located near the polypeptide exit tunnel on the outside of the subunit, while an extended beta-hairpin is found that lines the wall of the exit tunnel in the center of the 70S ribosome. In Eucalyptus globulus subsp. globulus (Tasmanian blue gum), this protein is Large ribosomal subunit protein uL22c (rpl22).